The chain runs to 380 residues: Alkaline protease (380 aa).

The first 27 residues, 1 to 27 (MKKPLGKIVASTALLISVAFSSSIASA), serve as a signal peptide directing secretion. A propeptide spanning residues 28–111 (AEEAKEKYLI…IEEDAEVTTM (84 aa)) is cleaved from the precursor. Residues 34-111 (KYLIGFNEQE…IEEDAEVTTM (78 aa)) enclose the Inhibitor I9 domain. Position 113 (Gln-113) interacts with Ca(2+). A Peptidase S8 domain is found at 116–379 (PWGISRVQAP…SGLVNAEAAT (264 aa)). The active-site Charge relay system is the Asp-143. Asp-151 contributes to the Ca(2+) binding site. Residue His-173 is the Charge relay system of the active site. Ca(2+) contacts are provided by Leu-184, Asn-186, Ile-188, Val-190, Ala-274, Tyr-276, and Ala-279. Ser-326 acts as the Charge relay system in catalysis.

It belongs to the peptidase S8 family. Requires Ca(2+) as cofactor.

It is found in the secreted. This chain is Alkaline protease, found in Shouchella clausii (Alkalihalobacillus clausii).